The primary structure comprises 394 residues: MTPQVLTILGSTGSIGESTLDVVSRHPEKFRVFALAGHKQVEKLAAQCQTFHPEYAVVADAEHAARLEALLKRDGTATQVLHGAQALVDVASADEVSGVMCAIVGAVGLPSALAAAQKGKTIYLANKETLVVSGALFMETARANGAAVLPVDSEHNAVFQVLPRDYTGRLNEHGIASIILTASGGPFLTADLNTFDSITPDQAVKHPNWRMGRKISVDSATMMNKGLELIEAHWLFNCPPDKLEVVIHPQSVIHSMVRYRDGSVLAQLGNPDMRTPIAYCLGLPERIDSGVGDLDFDALSALTFQKPDFDRFPCLKLAYEAMNAGGAAPCVLNAANEAAVAAFLDGQIKFTDIAKTVAHCLSQDFSDGIGDIGGLLAQDARTRAQARAFIGTLR.

Residues T12, G13, S14, I15, K39, Q40, and N126 each contribute to the NADPH site. 1-deoxy-D-xylulose 5-phosphate is bound at residue K127. Residue E128 coordinates NADPH. D152 contributes to the Mn(2+) binding site. 4 residues coordinate 1-deoxy-D-xylulose 5-phosphate: S153, E154, S183, and H206. E154 is a Mn(2+) binding site. G212 contributes to the NADPH binding site. The 1-deoxy-D-xylulose 5-phosphate site is built by S219, N224, K225, and E228. Residue E228 participates in Mn(2+) binding.

It belongs to the DXR family. Mg(2+) serves as cofactor. The cofactor is Mn(2+).

It catalyses the reaction 2-C-methyl-D-erythritol 4-phosphate + NADP(+) = 1-deoxy-D-xylulose 5-phosphate + NADPH + H(+). It functions in the pathway isoprenoid biosynthesis; isopentenyl diphosphate biosynthesis via DXP pathway; isopentenyl diphosphate from 1-deoxy-D-xylulose 5-phosphate: step 1/6. Its function is as follows. Catalyzes the NADPH-dependent rearrangement and reduction of 1-deoxy-D-xylulose-5-phosphate (DXP) to 2-C-methyl-D-erythritol 4-phosphate (MEP). The protein is 1-deoxy-D-xylulose 5-phosphate reductoisomerase of Neisseria meningitidis serogroup A / serotype 4A (strain DSM 15465 / Z2491).